Reading from the N-terminus, the 609-residue chain is MDSRASGTASNGETKPVYPVMEKEEEEGTLERGHWNNKMEFVLSVAGEIIGLGNVWRFPYLCYKNGGGAFFIPYLVFLFTCGVPVFLLETALGQYTSQGGVTAWRKICPIFEGIGYASQMIVILLNVYYIIVLAWALFYLFSSFTIDLPWGGCHHEWNTEHCVEFQKTNGSLNGTSENATSPVIEFWERRVLKISDGIQHLGALRWELALCLLLAWVICYFCIWKGVKSTGKVVYFTATFPYLMLVVLLIRGVTLPGAAQGIQFYLYPNLTRLWDPQVWMDAGTQIFFSFAICLGCLTALGSYNKYHNNCYRDCLALCFLNSGTSFVAGFAIFSILGFMSQEQGVPISEVAESGPGLAFIAYPRAVVMLPFSPLWACCFFFMVVLLGLDSQFVCVESLVTALVDMYPRVFRKKNRREVLILGVSVVSFLVGLVMLTEGGMYVFQLFDYYAASGMCLLFVAIFESLCVAWVYGARRFYDNIEDMIGYRPWPLIKYCWLFLTPAVCTATFLFSLIKYTPLTYNKKYTYPWWGDALGWLLALSSMVCIPAWSLYRLGTLKGPFREPPPRSLQRIRQLMCPAEDLPQRNPAGPSAPATPRTSLLRLTELESHC.

Over residues 1-13 (MDSRASGTASNGE) the composition is skewed to polar residues. A disordered region spans residues 1 to 23 (MDSRASGTASNGETKPVYPVMEK). Residues 1–40 (MDSRASGTASNGETKPVYPVMEKEEEEGTLERGHWNNKME) are Cytoplasmic-facing. 3 consecutive transmembrane segments (helical) span residues 41-61 (FVLS…FPYL), 68-88 (GAFF…VFLL), and 121-141 (IVIL…FYLF). Residues 142–206 (SSFTIDLPWG…GIQHLGALRW (65 aa)) are Extracellular-facing. Cysteines 153 and 162 form a disulfide. 2 N-linked (GlcNAc...) asparagine glycosylation sites follow: Asn169 and Asn173. Helical transmembrane passes span 207–227 (ELAL…WKGV) and 233–253 (VVYF…IRGV). The N-linked (GlcNAc...) asparagine glycan is linked to Asn269. 7 helical membrane passes run 282–302 (AGTQ…ALGS), 319–339 (FLNS…LGFM), 366–386 (VVML…VVLL), 418–438 (VLIL…LTEG), 453–473 (GMCL…VYGA), 490–510 (PLIK…TFLF), and 528–548 (WWGD…IPAW). Residues 549 to 609 (SLYRLGTLKG…LRLTELESHC (61 aa)) lie on the Cytoplasmic side of the membrane. Residue Thr594 is modified to Phosphothreonine. Ser598 bears the Phosphoserine mark.

This sequence belongs to the sodium:neurotransmitter symporter (SNF) (TC 2.A.22) family. SLC6A13 subfamily.

The protein resides in the cell membrane. It is found in the basolateral cell membrane. It catalyses the reaction 4-aminobutanoate(out) + chloride(out) + 2 Na(+)(out) = 4-aminobutanoate(in) + chloride(in) + 2 Na(+)(in). The catalysed reaction is taurine(out) + chloride(out) + 2 Na(+)(out) = taurine(in) + chloride(in) + 2 Na(+)(in). It carries out the reaction beta-alanine(out) + chloride(out) + 2 Na(+)(out) = beta-alanine(in) + chloride(in) + 2 Na(+)(in). The enzyme catalyses hypotaurine(out) + chloride(out) + 2 Na(+)(out) = hypotaurine(in) + chloride(in) + 2 Na(+)(in). Mediates sodium- and chloride-dependent transport of gamma-aminobutyric acid (GABA). Can also mediate transport of beta-alanine, taurine and hypotaurine. The chain is Sodium- and chloride-dependent GABA transporter 2 (SLC6A13) from Macaca fascicularis (Crab-eating macaque).